Here is a 126-residue protein sequence, read N- to C-terminus: Holo-[acyl-carrier-protein] synthase (126 aa).

Asp-9 and Glu-58 together coordinate Mg(2+).

It belongs to the P-Pant transferase superfamily. AcpS family. The cofactor is Mg(2+).

The protein localises to the cytoplasm. It carries out the reaction apo-[ACP] + CoA = holo-[ACP] + adenosine 3',5'-bisphosphate + H(+). Functionally, transfers the 4'-phosphopantetheine moiety from coenzyme A to a Ser of acyl-carrier-protein. The chain is Holo-[acyl-carrier-protein] synthase from Photorhabdus laumondii subsp. laumondii (strain DSM 15139 / CIP 105565 / TT01) (Photorhabdus luminescens subsp. laumondii).